Consider the following 352-residue polypeptide: DNA polymerase IV (352 aa).

The region spanning 6 to 187 is the UmuC domain; sequence IIHIDADCFY…VPVKFISGIG (182 aa). Positions 10 and 105 each coordinate Mg(2+). Residue Glu-106 is part of the active site.

The protein belongs to the DNA polymerase type-Y family. In terms of assembly, monomer. Mg(2+) serves as cofactor.

The protein localises to the cytoplasm. It catalyses the reaction DNA(n) + a 2'-deoxyribonucleoside 5'-triphosphate = DNA(n+1) + diphosphate. Poorly processive, error-prone DNA polymerase involved in untargeted mutagenesis. Copies undamaged DNA at stalled replication forks, which arise in vivo from mismatched or misaligned primer ends. These misaligned primers can be extended by PolIV. Exhibits no 3'-5' exonuclease (proofreading) activity. May be involved in translesional synthesis, in conjunction with the beta clamp from PolIII. This is DNA polymerase IV from Marinomonas sp. (strain MWYL1).